The following is a 392-amino-acid chain: MATPVDTEYYDLLGISTDATAVDIKKAYRKLAVKYHPDKNPDDPQGASEKFQKISEAYQVLGDEKLRSQYDQFGKEKAVPEQGFTDAYDFFTNLFGGAPFREWVGELSFVKEMFREEDSAVEQGQMNDKQQLLLESSEPTPTIKQQFNDRKKNAQIREREALAKREQEMIEDRRQRIKEVTENLEKRLDDWIAKATTEEGLNALREKYTQEANTLRIESFGVEILHAIGEVYTQKGRTVLKSSKFGIGGFWSRMKEKGKIARATWDTVSAAMDAKLSIDQMQKLEDKGEDQASAEERAKLELDITGKILRASWCGARYDIQGVLREACSNLLKKRVPTELRLKRAHALLEIGTIFSNVEADPDDPNRIFENLILENKKKRKKGSEAKPPKAT.

Residues 7–76 (TEYYDLLGIS…RSQYDQFGKE (70 aa)) form the J domain. Serine 108 bears the Phosphoserine mark.

This is an uncharacterized protein from Schizosaccharomyces pombe (strain 972 / ATCC 24843) (Fission yeast).